The chain runs to 626 residues: Chaperone protein HtpG (626 aa).

The tract at residues methionine 1 to arginine 339 is a; substrate-binding. The tract at residues glutamate 340–lysine 555 is b. A c region spans residues leucine 556 to glycine 626.

It belongs to the heat shock protein 90 family. In terms of assembly, homodimer.

It localises to the cytoplasm. Molecular chaperone. Has ATPase activity. The polypeptide is Chaperone protein HtpG (Haemophilus influenzae (strain PittEE)).